The chain runs to 382 residues: MWSGPPQPDQGLPPPLAAVPVPWKSTDPCQGHRESPGALVETSAGEEAQGQEGPAAAQLDVLRLRSSSMEIREKGSEFLKEELHRAQKELKLKDEECERLSKVREQLEQELEELTASLFEEAHKMVREANMKQAASEKQLKEARGKIDMLQAEVTALKTLVITSTPASPNRELHPQLLSPTKAGPRKGHSRHKSTSSTLCPAVCPAAGHTLTPDREGKEVDTILFAEFQAWRESPTLDKTCPFLERVYREDVGPCLDFTMQELSVLVRAAVEDNTLTIEPVASQTLPTVKVAEVDCSSTNTCALSGLTRTCRHRIRLGDSKSHYYISPSSRARITAVCNFFTYIRYIQQGLVRQDAEPMFWEIMRLRKEMSLAKLGFFPQEA.

Pro residues predominate over residues 1–17; the sequence is MWSGPPQPDQGLPPPLA. Residues 1–60 form a disordered region; the sequence is MWSGPPQPDQGLPPPLAAVPVPWKSTDPCQGHRESPGALVETSAGEEAQGQEGPAAAQLD. The span at 45–58 shows a compositional bias: low complexity; sequence GEEAQGQEGPAAAQ. Positions 73 to 161 form a coiled coil; that stretch reads EKGSEFLKEE…AEVTALKTLV (89 aa). A disordered region spans residues 166 to 198; it reads PASPNRELHPQLLSPTKAGPRKGHSRHKSTSST. 2 positions are modified to phosphoserine: S168 and S179. Residues 184 to 194 are compositionally biased toward basic residues; it reads GPRKGHSRHKS.

This sequence belongs to the SEC2 family. As to quaternary structure, interacts with RAB3A and IHPK1 through the coiled-coil domain. This interaction is competitive. IHPK1 kinase activity is not required for this interaction.

Its function is as follows. Guanine nucleotide exchange factor (GEF) which may activate RAB3A, a GTPase that regulates synaptic vesicle exocytosis. Promotes the exchange of GDP to GTP, converting inactive GDP-bound Rab proteins into their active GTP-bound form. May also activate RAB8A and RAB8B. The sequence is that of Guanine nucleotide exchange factor for Rab-3A (RAB3IL1) from Homo sapiens (Human).